Reading from the N-terminus, the 751-residue chain is MADKCPFHNQAPKPNVAGSGTQNRDWWPDQLKLNILRQHTTVSNPLDPDFDYAAAFNSLDYYALKKDLQDLMTDSQDWWPADFGHYGGLFIRMAWHSAGTYRTFDGRGGGGQGQQRFAPLNSWPDNVSLDKARRLLWPIKQKYGNKISWADLMILTGNVALESMGFKTFGFAGGRKDTWEADESVYWGGETTWLGNDVRYSHGFAGSSKHGAVIADEASHRDIHSRELEKPLAAAHMGLIYVNPEGPDGNPDPVAAARDIRTTFARMAMNDEETVALIAGGHTFGKTHGAASSDHVGSEPEAAGLEAQGLGWQNSHGSGKGAHTITSGLEVTWTKTPTQWNLNFLEYLFRFEWVLTKSPAGANQWVAKDADAFIPDAYDSSKKHRPQMLTTDLSLRFDPAYEKISRRFLENPDQFAEAFARAWFKLTHRDMGPRARYIGPEVPAEELSWQDPIPAVNHPVISETDIAALKRDILATGVDPSKFISTAWASASTFRGSDKRGGANGARIRLAPQRDWEVNNQPWLAAALKALEDIQDKFNSAQNDGKRVSLADLIVLAGCAAVEKAASDAGHIITVPFTPGRMDASQDQTDVESFNQMEPVADGFRNYGTSTARVPAEHYLVDKAQLLTLSAPEMTVLVGGLRALNANYDGSAHGVFTTRPGQLTNDFFVNLLDMNTSWKASGSGNDIYEGTDRRTGSKKWTATRADLVFGSHAELRAIAEVYGSSDGKGKFVKDFVAAWAKVMNLDRFDVN.

The tract at residues 1–24 (MADKCPFHNQAPKPNVAGSGTQNR) is disordered. The tryptophyl-tyrosyl-methioninium (Trp-Tyr) (with M-267) cross-link spans 95-241 (WHSAGTYRTF…LAAAHMGLIY (147 aa)). H96 functions as the Proton acceptor in the catalytic mechanism. The segment at residues 241 to 267 (YVNPEGPDGNPDPVAAARDIRTTFARM) is a cross-link (tryptophyl-tyrosyl-methioninium (Tyr-Met) (with W-95)). H282 contributes to the heme b binding site.

This sequence belongs to the peroxidase family. Peroxidase/catalase subfamily. As to quaternary structure, homodimer or homotetramer. Requires heme b as cofactor. Formation of the three residue Trp-Tyr-Met cross-link is important for the catalase, but not the peroxidase activity of the enzyme.

It localises to the cytoplasm. It catalyses the reaction H2O2 + AH2 = A + 2 H2O. The catalysed reaction is 2 H2O2 = O2 + 2 H2O. Bifunctional enzyme with both catalase and broad-spectrum peroxidase activity. This is Catalase-peroxidase from Aspergillus oryzae (strain ATCC 42149 / RIB 40) (Yellow koji mold).